A 146-amino-acid polypeptide reads, in one-letter code: Heat-stable 19 kDa antigen (146 aa).

The signal sequence occupies residues 1–20 (MKFSLLSAIAAAVFVPFTSA).

This sequence belongs to the cerato-platanin family. Glycosylated.

It localises to the secreted. The protein is Heat-stable 19 kDa antigen (CSA) of Coccidioides posadasii (strain C735) (Valley fever fungus).